We begin with the raw amino-acid sequence, 252 residues long: Uridylate kinase (252 aa).

Lys-20–Gly-23 is a binding site for ATP. The interval Gly-28 to Gly-33 is involved in allosteric activation by GTP. Gly-62 contacts UMP. ATP is bound by residues Gly-63 and Arg-67. Residues Asp-82 and Met-143–Thr-150 contribute to the UMP site. ATP is bound by residues Asn-171, Tyr-177, and Asp-180.

It belongs to the UMP kinase family. Homohexamer.

Its subcellular location is the cytoplasm. The enzyme catalyses UMP + ATP = UDP + ADP. It functions in the pathway pyrimidine metabolism; CTP biosynthesis via de novo pathway; UDP from UMP (UMPK route): step 1/1. Allosterically activated by GTP. Inhibited by UTP. Functionally, catalyzes the reversible phosphorylation of UMP to UDP. In Streptomyces avermitilis (strain ATCC 31267 / DSM 46492 / JCM 5070 / NBRC 14893 / NCIMB 12804 / NRRL 8165 / MA-4680), this protein is Uridylate kinase.